The primary structure comprises 201 residues: Ras-related protein Rab-5A (201 aa).

GTP-binding positions include 16 to 24, 35 to 41, 64 to 68, 122 to 125, and 152 to 154; these read GEAAVGKSS, LDYQEST, DTAGQ, NKLD, and SAK. Residues 38–46 carry the Effector region motif; sequence QESTIGAAF. 2 S-geranylgeranyl cysteine lipidation sites follow: C199 and C200.

Belongs to the small GTPase superfamily. Rab family.

It localises to the cell membrane. The protein resides in the endosome membrane. Its activity is regulated as follows. Regulated by guanine nucleotide exchange factors (GEFs) which promote the exchange of bound GDP for free GTP. Functionally, required for the fusion of plasma membranes and early endosomes. This chain is Ras-related protein Rab-5A (rab5A), found in Dictyostelium discoideum (Social amoeba).